The sequence spans 54 residues: ATP synthase F(0) complex subunit 8 (54 aa).

The helical transmembrane segment at tryptophan 9–isoleucine 29 threads the bilayer. The interval asparagine 35–tryptophan 54 is disordered.

The protein belongs to the ATPase protein 8 family. In terms of assembly, component of the ATP synthase complex composed at least of ATP5F1A/subunit alpha, ATP5F1B/subunit beta, ATP5MC1/subunit c (homooctomer), MT-ATP6/subunit a, MT-ATP8/subunit 8, ATP5ME/subunit e, ATP5MF/subunit f, ATP5MG/subunit g, ATP5MK/subunit k, ATP5MJ/subunit j, ATP5F1C/subunit gamma, ATP5F1D/subunit delta, ATP5F1E/subunit epsilon, ATP5PF/subunit F6, ATP5PB/subunit b, ATP5PD/subunit d, ATP5PO/subunit OSCP. ATP synthase complex consists of a soluble F(1) head domain (subunits alpha(3) and beta(3)) - the catalytic core - and a membrane F(0) domain - the membrane proton channel (subunits c, a, 8, e, f, g, k and j). These two domains are linked by a central stalk (subunits gamma, delta, and epsilon) rotating inside the F1 region and a stationary peripheral stalk (subunits F6, b, d, and OSCP).

It localises to the mitochondrion membrane. Functionally, subunit 8, of the mitochondrial membrane ATP synthase complex (F(1)F(0) ATP synthase or Complex V) that produces ATP from ADP in the presence of a proton gradient across the membrane which is generated by electron transport complexes of the respiratory chain. ATP synthase complex consist of a soluble F(1) head domain - the catalytic core - and a membrane F(1) domain - the membrane proton channel. These two domains are linked by a central stalk rotating inside the F(1) region and a stationary peripheral stalk. During catalysis, ATP synthesis in the catalytic domain of F(1) is coupled via a rotary mechanism of the central stalk subunits to proton translocation. In vivo, can only synthesize ATP although its ATP hydrolase activity can be activated artificially in vitro. Part of the complex F(0) domain. The chain is ATP synthase F(0) complex subunit 8 from Danio rerio (Zebrafish).